A 344-amino-acid chain; its full sequence is Anthranilate phosphoribosyltransferase (344 aa).

5-phospho-alpha-D-ribose 1-diphosphate is bound by residues Gly-80, 83-84 (GD), Thr-88, 90-93 (NIST), 108-116 (KHGNRSISS), and Ser-120. Residue Gly-80 coordinates anthranilate. Ser-92 is a binding site for Mg(2+). An anthranilate-binding site is contributed by Asn-111. Arg-166 is a binding site for anthranilate. Residues Asp-229 and Glu-230 each coordinate Mg(2+).

Belongs to the anthranilate phosphoribosyltransferase family. As to quaternary structure, homodimer. It depends on Mg(2+) as a cofactor.

It carries out the reaction N-(5-phospho-beta-D-ribosyl)anthranilate + diphosphate = 5-phospho-alpha-D-ribose 1-diphosphate + anthranilate. It functions in the pathway amino-acid biosynthesis; L-tryptophan biosynthesis; L-tryptophan from chorismate: step 2/5. Functionally, catalyzes the transfer of the phosphoribosyl group of 5-phosphorylribose-1-pyrophosphate (PRPP) to anthranilate to yield N-(5'-phosphoribosyl)-anthranilate (PRA). This is Anthranilate phosphoribosyltransferase from Chloroherpeton thalassium (strain ATCC 35110 / GB-78).